A 179-amino-acid polypeptide reads, in one-letter code: Adenine phosphoribosyltransferase (179 aa).

Belongs to the purine/pyrimidine phosphoribosyltransferase family. As to quaternary structure, homodimer.

The protein resides in the cytoplasm. It carries out the reaction AMP + diphosphate = 5-phospho-alpha-D-ribose 1-diphosphate + adenine. Its pathway is purine metabolism; AMP biosynthesis via salvage pathway; AMP from adenine: step 1/1. In terms of biological role, catalyzes a salvage reaction resulting in the formation of AMP, that is energically less costly than de novo synthesis. The protein is Adenine phosphoribosyltransferase of Nitrobacter hamburgensis (strain DSM 10229 / NCIMB 13809 / X14).